A 132-amino-acid chain; its full sequence is Small ribosomal subunit protein uS11 (132 aa).

Residues 1 to 21 form a disordered region; the sequence is MAAPKSAVRKPRRKDKKNIAV. Over residues 7-16 the composition is skewed to basic residues; sequence AVRKPRRKDK.

This sequence belongs to the universal ribosomal protein uS11 family. In terms of assembly, part of the 30S ribosomal subunit. Interacts with proteins S7 and S18. Binds to IF-3.

In terms of biological role, located on the platform of the 30S subunit, it bridges several disparate RNA helices of the 16S rRNA. Forms part of the Shine-Dalgarno cleft in the 70S ribosome. In Clavibacter sepedonicus (Clavibacter michiganensis subsp. sepedonicus), this protein is Small ribosomal subunit protein uS11.